The chain runs to 303 residues: Glycine--tRNA ligase alpha subunit (303 aa).

It belongs to the class-II aminoacyl-tRNA synthetase family. As to quaternary structure, tetramer of two alpha and two beta subunits.

The protein resides in the cytoplasm. The catalysed reaction is tRNA(Gly) + glycine + ATP = glycyl-tRNA(Gly) + AMP + diphosphate. The protein is Glycine--tRNA ligase alpha subunit of Klebsiella pneumoniae (strain 342).